The chain runs to 900 residues: Nuclear factor NF-kappa-B p100 subunit (900 aa).

A phosphoserine mark is found at S23 and S161. Residues 38–343 enclose the RHD domain; it reads PYLVIVEQPK…EVQRKRRKAL (306 aa). Positions 337–341 match the Nuclear localization signal motif; that stretch reads RKRRK. Residues 346–377 are GRR; it reads FSQPFGGGSHMGGGSGGAAGGYGGAGGGGSLG. The disordered stretch occupies residues 404-435; the sequence is GAQMAATVPSRDSGEEAAEPSAPSRTPQCEPQ. At T429 the chain carries Phosphothreonine. 6 ANK repeats span residues 487–519, 526–555, 559–591, 599–628, 633–663, and 667–696; these read NGDT…DLGV, LHQT…DPAL, HGDS…AVPQ, EGLY…EVEA, GGRT…NVNA, and AGNT…DIHA. Residues 698-734 form a disordered region; the sequence is NEEPLCPLPSPPTSDSDSDSEGPEKDTRSSFRGHTPL. Phosphoserine is present on residues S713, S715, and S717. An ANK 7 repeat occupies 729–758; it reads RGHTPLDLTCSTKVKTLLLNAAQNTMEPPL. Residues 764 to 851 enclose the Death domain; that stretch reads AGPGLSLGDT…EGVRLLRGPE (88 aa). S812 is subject to Phosphoserine. Residues 849–866 show a composition bias toward basic and acidic residues; the sequence is GPETRDKLPSTAEVKEDS. The tract at residues 849-900 is disordered; the sequence is GPETRDKLPSTAEVKEDSAYGSQSVEQEAEKLGPPPEPPGGLCHGHPQPQVH. K855 is covalently cross-linked (Glycyl lysine isopeptide (Lys-Gly) (interchain with G-Cter in ubiquitin)). Phosphoserine; by MAP3K14 is present on residues S866 and S870. Residues 888–900 show a composition bias toward low complexity; sequence GGLCHGHPQPQVH.

Component of the NF-kappa-B RelB-p52 complex. Homodimer; component of the NF-kappa-B p52-p52 complex. Component of the NF-kappa-B p65-p52 complex. Component of the NF-kappa-B p52-c-Rel complex. NFKB2/p52 interacts with NFKBIE. Component of a complex consisting of the NF-kappa-B p50-p50 homodimer and BCL3. Directly interacts with MEN1. In terms of processing, while translation occurs, the particular unfolded structure after the GRR repeat promotes the generation of p52 making it an acceptable substrate for the proteasome. This process is known as cotranslational processing. The processed form is active and the unprocessed form acts as an inhibitor (I kappa B-like), being able to form cytosolic complexes with NF-kappa B, trapping it in the cytoplasm. Complete folding of the region downstream of the GRR repeat precludes processing. Post-translationally, subsequent to MAP3K14-dependent serine phosphorylation, p100 polyubiquitination occurs then triggering its proteasome-dependent processing. Constitutive processing is tightly suppressed by its C-terminal processing inhibitory domain, named PID, which contains the death domain. In terms of processing, ubiquitinated by TRIM55; leading to processing by VCP and subsequent ubiquitin-dependent protein degradation by the proteasome.

It localises to the nucleus. It is found in the cytoplasm. NF-kappa-B is a pleiotropic transcription factor present in almost all cell types and is the endpoint of a series of signal transduction events that are initiated by a vast array of stimuli related to many biological processes such as inflammation, immunity, differentiation, cell growth, tumorigenesis and apoptosis. NF-kappa-B is a homo- or heterodimeric complex formed by the Rel-like domain-containing proteins RELA/p65, RELB, NFKB1/p105, NFKB1/p50, REL and NFKB2/p52. The dimers bind at kappa-B sites in the DNA of their target genes and the individual dimers have distinct preferences for different kappa-B sites that they can bind with distinguishable affinity and specificity. Different dimer combinations act as transcriptional activators or repressors, respectively. NF-kappa-B is controlled by various mechanisms of post-translational modification and subcellular compartmentalization as well as by interactions with other cofactors or corepressors. NF-kappa-B complexes are held in the cytoplasm in an inactive state complexed with members of the NF-kappa-B inhibitor (I-kappa-B) family. In a conventional activation pathway, I-kappa-B is phosphorylated by I-kappa-B kinases (IKKs) in response to different activators, subsequently degraded thus liberating the active NF-kappa-B complex which translocates to the nucleus. In a non-canonical activation pathway, the MAP3K14-activated CHUK/IKKA homodimer phosphorylates NFKB2/p100 associated with RelB, inducing its proteolytic processing to NFKB2/p52 and the formation of NF-kappa-B RelB-p52 complexes. The NF-kappa-B heterodimeric RelB-p52 complex is a transcriptional activator. The NF-kappa-B p52-p52 homodimer is a transcriptional repressor. NFKB2 appears to have dual functions such as cytoplasmic retention of attached NF-kappa-B proteins by p100 and generation of p52 by a cotranslational processing. The proteasome-mediated process ensures the production of both p52 and p100 and preserves their independent function. p52 binds to the kappa-B consensus sequence 5'-GGRNNYYCC-3', located in the enhancer region of genes involved in immune response and acute phase reactions. p52 and p100 are respectively the minor and major form; the processing of p100 being relatively poor. Isoform p49 is a subunit of the NF-kappa-B protein complex, which stimulates the HIV enhancer in synergy with p65. In concert with RELB, regulates the circadian clock by repressing the transcriptional activator activity of the CLOCK-BMAL1 heterodimer. The sequence is that of Nuclear factor NF-kappa-B p100 subunit (NFKB2) from Homo sapiens (Human).